The sequence spans 698 residues: SPX domain-containing membrane protein OsI_21475 (698 aa).

The SPX domain occupies V2 to T145. The next 6 helical transmembrane spans lie at F248 to I268, L279 to F299, L316 to M336, L339 to V357, A376 to L396, and L412 to F432. The segment at L467–P495 is disordered. The span at E476–E486 shows a compositional bias: acidic residues. A run of 5 helical transmembrane segments spans residues L514–I534, A545–G565, L577–S597, V605–L625, and L671–F691.

It belongs to the major facilitator superfamily.

Its subcellular location is the membrane. This is SPX domain-containing membrane protein OsI_21475 from Oryza sativa subsp. indica (Rice).